The primary structure comprises 163 residues: MPDRKGDRGRHQARKRAVDLLFEAEARGITAAEVAEARNALAEKRTDDIATLNPYTVTVAQGVTAHAAHIDDLISAHLQGWTLDRLPAVDRAILRVAVWELLHAEDVPEPVAVDEAVELAKQLSTDDSPGFVNGVLGQVMLVTPQIRAAAAAMQGGHNGGSGT.

Belongs to the NusB family.

Its function is as follows. Involved in transcription antitermination. Required for transcription of ribosomal RNA (rRNA) genes. Binds specifically to the boxA antiterminator sequence of the ribosomal RNA (rrn) operons. This is Transcription antitermination protein NusB from Mycolicibacterium vanbaalenii (strain DSM 7251 / JCM 13017 / BCRC 16820 / KCTC 9966 / NRRL B-24157 / PYR-1) (Mycobacterium vanbaalenii).